The sequence spans 103 residues: Large ribosomal subunit protein bL21 (103 aa).

Belongs to the bacterial ribosomal protein bL21 family. Part of the 50S ribosomal subunit. Contacts protein L20.

Functionally, this protein binds to 23S rRNA in the presence of protein L20. The protein is Large ribosomal subunit protein bL21 of Mycolicibacterium smegmatis (strain ATCC 700084 / mc(2)155) (Mycobacterium smegmatis).